The primary structure comprises 100 residues: Nucleoid-associated protein jhp_0031 (100 aa).

The protein belongs to the YbaB/EbfC family. As to quaternary structure, homodimer.

The protein localises to the cytoplasm. It localises to the nucleoid. In terms of biological role, binds to DNA and alters its conformation. May be involved in regulation of gene expression, nucleoid organization and DNA protection. This is Nucleoid-associated protein jhp_0031 from Helicobacter pylori (strain J99 / ATCC 700824) (Campylobacter pylori J99).